Consider the following 410-residue polypeptide: 2-epi-5-epi-valiolone synthase (410 aa).

Residues aspartate 66, 97–100 (ETLK), 130–134 (GVLMD), 154–155 (TT), lysine 167, lysine 176, and 194–197 (FLAT) contribute to the NAD(+) site. The active site involves lysine 167. Glutamate 209, histidine 280, and histidine 296 together coordinate a divalent metal cation.

It belongs to the sugar phosphate cyclases superfamily. EEVS family. Requires NAD(+) as cofactor. Co(2+) serves as cofactor.

The catalysed reaction is D-sedoheptulose 7-phosphate = 2-epi-5-epi-valiolone + phosphate. Catalyzes the cyclization of D-sedoheptulose 7-phosphate to 2-epi-5-epi-valiolone. Involved in salbostatin biosynthesis. The sequence is that of 2-epi-5-epi-valiolone synthase from Streptomyces albus (strain ATCC 21838 / DSM 41398 / FERM P-419 / JCM 4703 / NBRC 107858).